The sequence spans 437 residues: F-box only protein 9 (437 aa).

The interval 1–29 (MAEAEEDCHSEAVREGDDDDENESPAETD) is disordered. Residues 16-26 (GDDDDENESPA) are compositionally biased toward acidic residues. The stretch at 84-117 (ARELFLKAVEEEQNGALYEAIKFYRRAMQLVPDI) is one TPR repeat. Phosphoserine is present on S126. The region spanning 175–226 (QTHISALPMEVLMYVFRWVVSSDLDLRSLEQLSQVCRGFYICARDPEIWRLA) is the F-box domain.

As to quaternary structure, part of the SCF (SKP1-CUL1-F-box) E3 ubiquitin-protein ligase complex SCF(FBXO9) composed of CUL1, SKP1, RBX1 and FBXO9. Interacts with TTI1 and TELO2; when TTI1 and TELO2 are phosphorylated by CK2.

The protein resides in the cytoplasm. It participates in protein modification; protein ubiquitination. Its function is as follows. Substrate recognition component of a SCF (SKP1-CUL1-F-box protein) E3 ubiquitin-protein ligase complex which mediates the ubiquitination and subsequent proteasomal degradation of target proteins and plays a role in several biological processes such as cell cycle, cell proliferation, or maintenance of chromosome stability. Ubiquitinates mTORC1-bound TTI1 and TELO2 when they are phosphorylated by CK2 following growth factor deprivation, leading to their degradation. In contrast, does not mediate ubiquitination of TTI1 and TELO2 when they are part of the mTORC2 complex. As a consequence, mTORC1 is inactivated to restrain cell growth and protein translation, while mTORC2 is the activated due to the relief of feedback inhibition by mTORC1. Plays a role in maintaining epithelial cell survival by regulating the turn-over of chromatin modulator PRMT4 through ubiquitination and degradation by the proteasomal pathway. Also regulates PPARgamma stability by facilitating PPARgamma/PPARG ubiquitination and thereby plays a role in adipocyte differentiation. This chain is F-box only protein 9 (FBXO9), found in Bos taurus (Bovine).